Consider the following 194-residue polypeptide: GTP cyclohydrolase-2 (194 aa).

Residue 47–51 coordinates GTP; that stretch reads RVHSE. Positions 52, 63, and 65 each coordinate Zn(2+). GTP is bound by residues Gln-68, 90-92, and Thr-112; that span reads EGR. Residue Asp-124 is the Proton acceptor of the active site. Catalysis depends on Arg-126, which acts as the Nucleophile. The GTP site is built by Thr-147 and Lys-152.

The protein belongs to the GTP cyclohydrolase II family. Homodimer. Requires Zn(2+) as cofactor.

The enzyme catalyses GTP + 4 H2O = 2,5-diamino-6-hydroxy-4-(5-phosphoribosylamino)-pyrimidine + formate + 2 phosphate + 3 H(+). It participates in cofactor biosynthesis; riboflavin biosynthesis; 5-amino-6-(D-ribitylamino)uracil from GTP: step 1/4. Its function is as follows. Catalyzes the conversion of GTP to 2,5-diamino-6-ribosylamino-4(3H)-pyrimidinone 5'-phosphate (DARP), formate and pyrophosphate. This is GTP cyclohydrolase-2 from Buchnera aphidicola subsp. Acyrthosiphon pisum (strain APS) (Acyrthosiphon pisum symbiotic bacterium).